The chain runs to 354 residues: Selenide, water dikinase (354 aa).

Cys23 is a catalytic residue. ATP contacts are provided by residues Lys26 and 54–56; that span reads TSD. Mg(2+) is bound at residue Asp57. ATP contacts are provided by residues Asp74, Asp97, and 145–147; that span reads GHS. Residue Asp97 participates in Mg(2+) binding. Asp233 lines the Mg(2+) pocket.

The protein belongs to the selenophosphate synthase 1 family. Class I subfamily. Homodimer. Mg(2+) serves as cofactor.

It catalyses the reaction hydrogenselenide + ATP + H2O = selenophosphate + AMP + phosphate + 2 H(+). In terms of biological role, synthesizes selenophosphate from selenide and ATP. This chain is Selenide, water dikinase, found in Burkholderia pseudomallei (strain K96243).